Here is a 434-residue protein sequence, read N- to C-terminus: MRMVLIDGEHYPDVTAWAIKKIGDVSCAVFLGGTEKIGDMKSLEEKIGVKLYYGESYISNIKKAINENKIGEVIDLSDEPVLNYEDRFRIAAVLLKHGIKYKGADFEFSPKEMVQINKPSLTILGTGKRVGKTAISGFVARTLKEISKPIIVTMGRGGPEEPEIIEGNKLEITPDFLVRVAESGKHAASDHFEDALTSRVITIGCRRCGGGMVGFSFFDIVNKGIKLAEKLEGDIVILEGSGATFPAVKADKYITVVGATQRIEFIKSYFGPFRIGLADLIVITLADMVSKEKIEKIQKIIESINPDAEIHLTAFKPRPLSEIKGKKAILVMTAPPEGLEKAARHLENRYDVEIVGKSANLANRPKLIEDLSRFKYYDTVLVELKAAAVDVATKEALKYGKEVIYIDNEPVNIDNKNLREAVLEIGWELKGERK.

Belongs to the cyclic 2,3-diphosphoglycerate synthetase family.

It is found in the cytoplasm. It carries out the reaction (2R)-2,3-bisphosphoglycerate + ATP + H(+) = cyclic (2R)-2,3-bisphosphoglycerate + ADP + phosphate. Functionally, catalyzes the formation of cyclic 2,3-diphosphoglycerate (cDPG) by formation of an intramolecular phosphoanhydride bond at the expense of ATP. The chain is Cyclic 2,3-diphosphoglycerate synthetase from Thermococcus sibiricus (strain DSM 12597 / MM 739).